The following is a 294-amino-acid chain: Elongation factor Ts (294 aa).

The segment at 79 to 82 (TDFV) is involved in Mg(2+) ion dislocation from EF-Tu.

The protein belongs to the EF-Ts family.

It localises to the cytoplasm. Associates with the EF-Tu.GDP complex and induces the exchange of GDP to GTP. It remains bound to the aminoacyl-tRNA.EF-Tu.GTP complex up to the GTP hydrolysis stage on the ribosome. The polypeptide is Elongation factor Ts (Geobacillus thermodenitrificans (strain NG80-2)).